A 458-amino-acid chain; its full sequence is Macrophage scavenger receptor types I and II (458 aa).

Topologically, residues 1-55 are cytoplasmic; sequence MTKEMTENQRLCPHEQEDADCSSESVKFDARSMTASLPHSTKNGPSLQEKLKSFK. Phosphoserine occurs at positions 32 and 36. Residues 56–78 traverse the membrane as a helical; Signal-anchor for type II membrane protein segment; the sequence is AALIALYLLVFAVLIPVVGIVTA. Residues 79–114 form a spacer region; it reads QLLNWEMKNCLVCSLNTSDTSQGPMEKENTSKVEMR. Residues 79–458 lie on the Extracellular side of the membrane; that stretch reads QLLNWEMKNC…SEDAGVTCTS (380 aa). Asn-94, Asn-107, Asn-147, Asn-188, Asn-253, and Asn-271 each carry an N-linked (GlcNAc...) asparagine glycan. A coiled-coil region spans residues 209-259; sequence TAKQQEDISKLEERVYKVSAEVQSVKEEQAHVEQEVKQEVRVLNNITNDLR. A disordered region spans residues 272-357; the sequence is ITFIQGPPGP…VGGSTPLKTV (86 aa). In terms of domain architecture, Collagen-like spans 277 to 350; it reads GPPGPQGEKG…QKGEKGSVGG (74 aa). Residues 316 to 325 show a composition bias toward gly residues; the sequence is GFPGGRGNPG. Over residues 326–339 the composition is skewed to low complexity; that stretch reads APGKPGRSGSPGPK. The SRCR domain maps to 357–457; it reads VRLVGGSGAH…HSEDAGVTCT (101 aa). Disulfide bonds link Cys-382/Cys-446, Cys-395/Cys-456, and Cys-426/Cys-436.

As to quaternary structure, homotrimer. Interacts with MYO18A.

The protein localises to the membrane. Membrane glycoproteins implicated in the pathologic deposition of cholesterol in arterial walls during atherogenesis. Two types of receptor subunits exist. These receptors mediate the endocytosis of a diverse group of macromolecules, including modified low density lipoproteins (LDL). This chain is Macrophage scavenger receptor types I and II (Msr1), found in Mus musculus (Mouse).